The following is a 356-amino-acid chain: S-adenosylmethionine:tRNA ribosyltransferase-isomerase (356 aa).

This sequence belongs to the QueA family. In terms of assembly, monomer.

Its subcellular location is the cytoplasm. It catalyses the reaction 7-aminomethyl-7-carbaguanosine(34) in tRNA + S-adenosyl-L-methionine = epoxyqueuosine(34) in tRNA + adenine + L-methionine + 2 H(+). It functions in the pathway tRNA modification; tRNA-queuosine biosynthesis. Transfers and isomerizes the ribose moiety from AdoMet to the 7-aminomethyl group of 7-deazaguanine (preQ1-tRNA) to give epoxyqueuosine (oQ-tRNA). In Shigella boydii serotype 4 (strain Sb227), this protein is S-adenosylmethionine:tRNA ribosyltransferase-isomerase.